The chain runs to 489 residues: NADH-quinone oxidoreductase subunit N (489 aa).

The next 14 helical transmembrane spans lie at 6 to 26, 37 to 57, 66 to 86, 105 to 125, 127 to 147, 159 to 179, 204 to 224, 239 to 259, 271 to 291, 299 to 319, 329 to 349, 377 to 397, 408 to 430, and 452 to 472; these read VLFI…AVML, VFYI…PASS, LLIV…GSLA, FYLL…AHHL, AIFI…GYAF, YMVL…LIYA, ITLL…KLSL, PAPV…AVLL, FFYS…NLLA, RLLG…LIAC, VALY…VVSL, SAMT…GFIG, FHLW…YYLR, and ALTT…LLGI.

It belongs to the complex I subunit 2 family. NDH-1 is composed of 14 different subunits. Subunits NuoA, H, J, K, L, M, N constitute the membrane sector of the complex.

The protein localises to the cell inner membrane. It carries out the reaction a quinone + NADH + 5 H(+)(in) = a quinol + NAD(+) + 4 H(+)(out). Its function is as follows. NDH-1 shuttles electrons from NADH, via FMN and iron-sulfur (Fe-S) centers, to quinones in the respiratory chain. The immediate electron acceptor for the enzyme in this species is believed to be ubiquinone. Couples the redox reaction to proton translocation (for every two electrons transferred, four hydrogen ions are translocated across the cytoplasmic membrane), and thus conserves the redox energy in a proton gradient. This is NADH-quinone oxidoreductase subunit N from Tolumonas auensis (strain DSM 9187 / NBRC 110442 / TA 4).